A 655-amino-acid polypeptide reads, in one-letter code: Macrolide export ATP-binding/permease protein MacB (655 aa).

Residues 6-244 (IELRDVWREF…DALAGDEGPE (239 aa)) form the ABC transporter domain. 42-49 (GASGSGKS) provides a ligand contact to ATP. The disordered stretch occupies residues 225–252 (DQARPDAPPLDALAGDEGPEAPRPAPQP). 4 helical membrane passes run 280 to 300 (LTMLGIIIGIAAVVSVVALGA), 527 to 547 (LTLLVSMIAVISLVVVGIGVM), 583 to 603 (VLVCLIGGVLGILLSLSIGVL), and 620 to 640 (SMVLAFVCSTLIGVAFGFLPA).

Belongs to the ABC transporter superfamily. Macrolide exporter (TC 3.A.1.122) family. As to quaternary structure, homodimer.

It localises to the cell inner membrane. Its function is as follows. Non-canonical ABC transporter that contains transmembrane domains (TMD), which form a pore in the inner membrane, and an ATP-binding domain (NBD), which is responsible for energy generation. Confers resistance against macrolides. The protein is Macrolide export ATP-binding/permease protein MacB of Bordetella avium (strain 197N).